Consider the following 137-residue polypeptide: Holo-[acyl-carrier-protein] synthase (137 aa).

Mg(2+)-binding residues include aspartate 8 and glutamate 57.

The protein belongs to the P-Pant transferase superfamily. AcpS family. Requires Mg(2+) as cofactor.

It localises to the cytoplasm. It catalyses the reaction apo-[ACP] + CoA = holo-[ACP] + adenosine 3',5'-bisphosphate + H(+). In terms of biological role, transfers the 4'-phosphopantetheine moiety from coenzyme A to a Ser of acyl-carrier-protein. The sequence is that of Holo-[acyl-carrier-protein] synthase from Cereibacter sphaeroides (strain ATCC 17029 / ATH 2.4.9) (Rhodobacter sphaeroides).